We begin with the raw amino-acid sequence, 116 residues long: Protein Rev (116 aa).

Residues serine 5 and serine 8 each carry the phosphoserine; by host CK2 modification. A homomultimerization region spans residues 18–26 (CIKILYQSN). The interval 27-47 (PYPKPEGTRQARRNRRRRWRA) is disordered. A Nuclear localization signal and RNA-binding (RRE) motif is present at residues 34–50 (TRQARRNRRRRWRARQR). Residues 36–47 (QARRNRRRRWRA) show a composition bias toward basic residues. Residues 73 to 84 (LQLPPLERLHIN) carry the Nuclear export signal and binding to XPO1 motif. Residues 87 to 116 (EDCGQGPEEGVGSSQISGESHAVLESGTKE) are disordered. Position 99 is a phosphoserine; by host (serine 99).

The protein belongs to the HIV-1 REV protein family. In terms of assembly, homomultimer; when bound to the RRE. Multimeric assembly is essential for activity and may involve XPO1. Binds to human KPNB1, XPO1, TNPO1, RANBP5 and IPO7. Interacts with the viral Integrase. Interacts with human KHDRBS1. Interacts with human NAP1; this interaction decreases Rev multimerization and stimulates its activity. Interacts with human DEAD-box helicases DDX3 and DDX24; these interactions may serve for viral RNA export to the cytoplasm and packaging, respectively. Interacts with human PSIP1; this interaction may inhibit HIV-1 DNA integration by promoting dissociation of the Integrase-LEDGF/p75 complex. Asymmetrically arginine dimethylated at one site by host PRMT6. Methylation impairs the RNA-binding activity and export of viral RNA from the nucleus to the cytoplasm. In terms of processing, phosphorylated by protein kinase CK2. Presence of, and maybe binding to the N-terminus of the regulatory beta subunit of CK2 is necessary for CK2-mediated Rev's phosphorylation.

It is found in the host nucleus. Its subcellular location is the host nucleolus. The protein resides in the host cytoplasm. Functionally, escorts unspliced or incompletely spliced viral pre-mRNAs (late transcripts) out of the nucleus of infected cells. These pre-mRNAs carry a recognition sequence called Rev responsive element (RRE) located in the env gene, that is not present in fully spliced viral mRNAs (early transcripts). This function is essential since most viral proteins are translated from unspliced or partially spliced pre-mRNAs which cannot exit the nucleus by the pathway used by fully processed cellular mRNAs. Rev itself is translated from a fully spliced mRNA that readily exits the nucleus. Rev's nuclear localization signal (NLS) binds directly to KPNB1/Importin beta-1 without previous binding to KPNA1/Importin alpha-1. KPNB1 binds to the GDP bound form of RAN (Ran-GDP) and targets Rev to the nucleus. In the nucleus, the conversion from Ran-GDP to Ran-GTP dissociates Rev from KPNB1 and allows Rev's binding to the RRE in viral pre-mRNAs. Rev multimerization on the RRE via cooperative assembly exposes its nuclear export signal (NES) to the surface. Rev can then form a complex with XPO1/CRM1 and Ran-GTP, leading to nuclear export of the complex. Conversion from Ran-GTP to Ran-GDP mediates dissociation of the Rev/RRE/XPO1/RAN complex, so that Rev can return to the nucleus for a subsequent round of export. Beside KPNB1, also seems to interact with TNPO1/Transportin-1, RANBP5/IPO5 and IPO7/RANBP7 for nuclear import. The nucleoporin-like HRB/RIP is an essential cofactor that probably indirectly interacts with Rev to release HIV RNAs from the perinuclear region to the cytoplasm. The polypeptide is Protein Rev (Human immunodeficiency virus type 1 group M subtype F1 (isolate VI850) (HIV-1)).